We begin with the raw amino-acid sequence, 698 residues long: Ion-translocating oxidoreductase complex subunit C (698 aa).

2 4Fe-4S ferredoxin-type domains span residues 366-397 and 407-436; these read TEMGLSEPEQSCIRCGLCVDACPAGLLPQQLY and KARNHNLFDCIECGACAYVCPSNIPLVQYY. Residues Cys-377, Cys-380, Cys-383, Cys-387, Cys-416, Cys-419, Cys-422, and Cys-426 each coordinate [4Fe-4S] cluster.

This sequence belongs to the 4Fe4S bacterial-type ferredoxin family. RnfC subfamily. In terms of assembly, the complex is composed of six subunits: RnfA, RnfB, RnfC, RnfD, RnfE and RnfG. It depends on [4Fe-4S] cluster as a cofactor.

The protein resides in the cell inner membrane. Part of a membrane-bound complex that couples electron transfer with translocation of ions across the membrane. The polypeptide is Ion-translocating oxidoreductase complex subunit C (Yersinia pseudotuberculosis serotype O:3 (strain YPIII)).